The chain runs to 129 residues: Small ribosomal subunit protein uS11 (129 aa).

Belongs to the universal ribosomal protein uS11 family. Part of the 30S ribosomal subunit. Interacts with proteins S7 and S18. Binds to IF-3.

In terms of biological role, located on the platform of the 30S subunit, it bridges several disparate RNA helices of the 16S rRNA. Forms part of the Shine-Dalgarno cleft in the 70S ribosome. The protein is Small ribosomal subunit protein uS11 of Jannaschia sp. (strain CCS1).